We begin with the raw amino-acid sequence, 511 residues long: Phenylalanine--tRNA ligase alpha subunit (511 aa).

Residues Thr-352, 390-392 (QVE), Tyr-429, and Phe-455 each bind L-phenylalanine.

It belongs to the class-II aminoacyl-tRNA synthetase family. Phe-tRNA synthetase alpha subunit type 2 subfamily. As to quaternary structure, tetramer of two alpha and two beta subunits. Mg(2+) serves as cofactor.

The protein localises to the cytoplasm. It catalyses the reaction tRNA(Phe) + L-phenylalanine + ATP = L-phenylalanyl-tRNA(Phe) + AMP + diphosphate + H(+). This Methanothermobacter thermautotrophicus (strain ATCC 29096 / DSM 1053 / JCM 10044 / NBRC 100330 / Delta H) (Methanobacterium thermoautotrophicum) protein is Phenylalanine--tRNA ligase alpha subunit.